The sequence spans 142 residues: Large ribosomal subunit protein uL11 (142 aa).

It belongs to the universal ribosomal protein uL11 family. In terms of assembly, part of the ribosomal stalk of the 50S ribosomal subunit. Interacts with L10 and the large rRNA to form the base of the stalk. L10 forms an elongated spine to which L12 dimers bind in a sequential fashion forming a multimeric L10(L12)X complex. In terms of processing, one or more lysine residues are methylated.

Functionally, forms part of the ribosomal stalk which helps the ribosome interact with GTP-bound translation factors. The chain is Large ribosomal subunit protein uL11 from Mesoplasma florum (strain ATCC 33453 / NBRC 100688 / NCTC 11704 / L1) (Acholeplasma florum).